Here is a 182-residue protein sequence, read N- to C-terminus: NADH-quinone oxidoreductase subunit I (182 aa).

2 4Fe-4S ferredoxin-type domains span residues L52–A82 and E92–D121. [4Fe-4S] cluster-binding residues include C62, C65, C68, C72, C101, C104, C107, and C111.

This sequence belongs to the complex I 23 kDa subunit family. NDH-1 is composed of 13 different subunits. Subunits NuoA, H, J, K, L, M, N constitute the membrane sector of the complex. [4Fe-4S] cluster is required as a cofactor.

The protein resides in the cell inner membrane. The catalysed reaction is a quinone + NADH + 5 H(+)(in) = a quinol + NAD(+) + 4 H(+)(out). Its function is as follows. NDH-1 shuttles electrons from NADH, via FMN and iron-sulfur (Fe-S) centers, to quinones in the respiratory chain. The immediate electron acceptor for the enzyme in this species is believed to be ubiquinone. Couples the redox reaction to proton translocation (for every two electrons transferred, four hydrogen ions are translocated across the cytoplasmic membrane), and thus conserves the redox energy in a proton gradient. The chain is NADH-quinone oxidoreductase subunit I from Pseudomonas putida (strain ATCC 47054 / DSM 6125 / CFBP 8728 / NCIMB 11950 / KT2440).